The following is a 703-amino-acid chain: 1,4-alpha-glucan-branching enzyme (703 aa).

(1,4-alpha-D-glucosyl)n-binding residues include W93 and K130. The Nucleophile role is filled by D355. The active-site Proton donor is the E415.

This sequence belongs to the glycosyl hydrolase 13 family. GlgB subfamily.

The protein resides in the cytoplasm. It catalyses the reaction Transfers a segment of a (1-&gt;4)-alpha-D-glucan chain to a primary hydroxy group in a similar glucan chain.. The protein operates within glycan biosynthesis; glycogen biosynthesis. In terms of biological role, glycogen-branching enzyme participates in the glycogen biosynthetic process along with glycogenin and glycogen synthase. Generates alpha-1,6-glucosidic branches from alpha-1,4-linked glucose chains, to increase solubility of the glycogen polymer. This Eremothecium gossypii (strain ATCC 10895 / CBS 109.51 / FGSC 9923 / NRRL Y-1056) (Yeast) protein is 1,4-alpha-glucan-branching enzyme (GLC3).